A 952-amino-acid chain; its full sequence is Glutamate receptor 2.7 (952 aa).

The N-terminal stretch at 1 to 32 is a signal peptide; that stretch reads MKVMNPRKTNNTFMYYFVLFVCGFVLMEGCLG. The Extracellular portion of the chain corresponds to 33–582; sequence QNQTTEIKVG…NTWVFLRPWS (550 aa). N-linked (GlcNAc...) asparagine glycosylation is found at asparagine 34, asparagine 60, asparagine 355, asparagine 428, and asparagine 546. Residues 583-603 form a helical membrane-spanning segment; that stretch reads LDLWVTTACFFVFIGFIVWIL. At 604–612 the chain is on the cytoplasmic side; the sequence is EHRVNTDFR. A helical membrane pass occupies residues 613-633; the sequence is GPPHHQIGTSFWFAFSTMNFA. At 634 to 637 the chain is on the cytoplasmic side; it reads HREK. A helical membrane pass occupies residues 638 to 658; it reads VVSNLARFVVLVWCFVVLVLI. Residues 659–821 lie on the Extracellular side of the membrane; sequence QSYTANLTSF…LSSNHLSLSS (163 aa). 5 N-linked (GlcNAc...) asparagine glycosylation sites follow: asparagine 664, asparagine 728, asparagine 748, asparagine 784, and asparagine 809. The chain crosses the membrane as a helical span at residues 822 to 842; the sequence is FWGLFLIAGIASFLALLIFVA. Over 843-952 the chain is Cytoplasmic; that stretch reads NFLYEHKHTL…ESAIIQCEGE (110 aa). The span at 889-908 shows a compositional bias: polar residues; it reads VSSPITQGSSSPLTDQSTPL. Disordered regions lie at residues 889–914 and 932–952; these read VSSP…SPEQ and FTTQ…CEGE.

Belongs to the glutamate-gated ion channel (TC 1.A.10.1) family. As to quaternary structure, may form heteromers. Expressed predominantly in leaves.

Its subcellular location is the membrane. Its function is as follows. Glutamate-gated receptor that probably acts as a non-selective cation channel. May be involved in light-signal transduction and calcium homeostasis via the regulation of calcium influx into cells. In Arabidopsis thaliana (Mouse-ear cress), this protein is Glutamate receptor 2.7 (GLR2.7).